A 413-amino-acid polypeptide reads, in one-letter code: Arginine biosynthesis bifunctional protein ArgJ (413 aa).

Residues Thr-158, Lys-184, Thr-195, Glu-285, Asn-408, and Ser-413 each contribute to the substrate site. Thr-195 (nucleophile) is an active-site residue.

The protein belongs to the ArgJ family. Heterotetramer of two alpha and two beta chains.

The protein resides in the cytoplasm. It catalyses the reaction N(2)-acetyl-L-ornithine + L-glutamate = N-acetyl-L-glutamate + L-ornithine. The enzyme catalyses L-glutamate + acetyl-CoA = N-acetyl-L-glutamate + CoA + H(+). The protein operates within amino-acid biosynthesis; L-arginine biosynthesis; L-ornithine and N-acetyl-L-glutamate from L-glutamate and N(2)-acetyl-L-ornithine (cyclic): step 1/1. Its pathway is amino-acid biosynthesis; L-arginine biosynthesis; N(2)-acetyl-L-ornithine from L-glutamate: step 1/4. Catalyzes two activities which are involved in the cyclic version of arginine biosynthesis: the synthesis of N-acetylglutamate from glutamate and acetyl-CoA as the acetyl donor, and of ornithine by transacetylation between N(2)-acetylornithine and glutamate. This chain is Arginine biosynthesis bifunctional protein ArgJ, found in Rhizobium meliloti (strain 1021) (Ensifer meliloti).